We begin with the raw amino-acid sequence, 196 residues long: MVAQVQKQAPTFKKTAVVDGVFDEVSLDKYKGKYVVLAFIPLAFTFVCPTEIIAFSEAAKKFEEQGAQVLFASTDSEYSLLAWTNIPRKEGGLGPINIPLLADTNHSLSRDYGVLIEEEGVALRGLFIIDPKGVIRHITINDLPVGRNVDEALRLVEAFQWTDKNGTVLPCNWTPGAATIKPTVEDSKEYFEAANK.

The region spanning 3–161 is the Thioredoxin domain; the sequence is AQVQKQAPTF…ALRLVEAFQW (159 aa). Lysine 14 participates in a covalent cross-link: Glycyl lysine isopeptide (Lys-Gly) (interchain with G-Cter in ubiquitin). A substrate-binding site is contributed by 45 to 47; sequence TFV. Cysteine 48 acts as the Cysteine sulfenic acid (-SOH) intermediate in catalysis. Lysine 89 participates in a covalent cross-link: Glycyl lysine isopeptide (Lys-Gly) (interchain with G-Cter in ubiquitin). Arginine 124 serves as a coordination point for substrate. A Glycyl lysine isopeptide (Lys-Gly) (interchain with G-Cter in ubiquitin) cross-link involves residue lysine 132. Phosphothreonine is present on threonine 174.

Belongs to the peroxiredoxin family. AhpC/Prx1 subfamily. As to quaternary structure, homodimer; disulfide-linked, upon oxidation. Interacts with YAP1 via transient disulfide linkages. In terms of processing, the enzyme can be inactivated by further oxidation of the cysteine sulfenic acid (C(P)-SOH) to sulphinic acid (C(P)-SO2H) instead of its condensation to a disulfide bond. It can be reactivated by forming a transient disulfide bond with sulfiredoxin SRX1, which reduces the cysteine sulfinic acid in an ATP- and Mg-dependent manner.

The protein localises to the cytoplasm. The enzyme catalyses a hydroperoxide + [thioredoxin]-dithiol = an alcohol + [thioredoxin]-disulfide + H2O. Its function is as follows. Thiol-specific peroxidase that catalyzes the reduction of hydrogen peroxide and organic hydroperoxides to water and alcohols, respectively. Plays a role in cell protection against oxidative stress by detoxifying peroxides and as sensor of hydrogen peroxide-mediated signaling events. Protects the cell against the oxidative stress caused by nascent-protein misfolding and aggregation. Relays hydrogen peroxide as a signal to the transcription factor YAP1 by inducing the formation of intramolecular disulfide bonds in YAP1, which causes its nuclear accumulation and activation. Can act alternatively as peroxidase and molecular chaperone. Oxidative stress and heat shock exposure cause a reversible shift of the protein structure from low MW species to high MW complexes, triggering a peroxidase-to-chaperone functional switch. The chaperone function of the protein enhances resistance to heat shock. This is Peroxiredoxin TSA1 from Saccharomyces cerevisiae (strain ATCC 204508 / S288c) (Baker's yeast).